The primary structure comprises 207 residues: Segregation and condensation protein B (207 aa).

The disordered stretch occupies residues 173 to 207; the sequence is DDTAESDNDSADLYYRQFEQTLNETGPETAPKGEQ.

It belongs to the ScpB family. In terms of assembly, homodimer. Homodimerization may be required to stabilize the binding of ScpA to the Smc head domains. Component of a cohesin-like complex composed of ScpA, ScpB and the Smc homodimer, in which ScpA and ScpB bind to the head domain of Smc. The presence of the three proteins is required for the association of the complex with DNA.

The protein localises to the cytoplasm. In terms of biological role, participates in chromosomal partition during cell division. May act via the formation of a condensin-like complex containing Smc and ScpA that pull DNA away from mid-cell into both cell halves. This Latilactobacillus sakei subsp. sakei (strain 23K) (Lactobacillus sakei subsp. sakei) protein is Segregation and condensation protein B.